The chain runs to 268 residues: Ribosomal RNA small subunit methyltransferase A (268 aa).

The S-adenosyl-L-methionine site is built by asparagine 23, isoleucine 25, glycine 50, glutamate 72, aspartate 97, and asparagine 116.

It belongs to the class I-like SAM-binding methyltransferase superfamily. rRNA adenine N(6)-methyltransferase family. RsmA subfamily.

The protein localises to the cytoplasm. The enzyme catalyses adenosine(1518)/adenosine(1519) in 16S rRNA + 4 S-adenosyl-L-methionine = N(6)-dimethyladenosine(1518)/N(6)-dimethyladenosine(1519) in 16S rRNA + 4 S-adenosyl-L-homocysteine + 4 H(+). Specifically dimethylates two adjacent adenosines (A1518 and A1519) in the loop of a conserved hairpin near the 3'-end of 16S rRNA in the 30S particle. May play a critical role in biogenesis of 30S subunits. This Rickettsia bellii (strain OSU 85-389) protein is Ribosomal RNA small subunit methyltransferase A.